Here is a 264-residue protein sequence, read N- to C-terminus: Siroheme biosynthesis protein met8 (264 aa).

NAD(+) is bound by residues 32–33 and 53–56; these read VV and PKAG. The Proton acceptor role is filled by Asp117.

Belongs to the precorrin-2 dehydrogenase / sirohydrochlorin ferrochelatase family. MET8 subfamily.

The protein localises to the cytoplasm. Its subcellular location is the nucleus. The catalysed reaction is precorrin-2 + NAD(+) = sirohydrochlorin + NADH + 2 H(+). It carries out the reaction siroheme + 2 H(+) = sirohydrochlorin + Fe(2+). It functions in the pathway porphyrin-containing compound metabolism; siroheme biosynthesis; siroheme from sirohydrochlorin: step 1/1. The protein operates within porphyrin-containing compound metabolism; siroheme biosynthesis; sirohydrochlorin from precorrin-2: step 1/1. Functionally, catalyzes the conversion of precorrin-2 into siroheme. This reaction consist of the NAD-dependent oxidation of precorrin-2 into sirohydrochlorin and its subsequent ferrochelation into siroheme. This Schizosaccharomyces pombe (strain 972 / ATCC 24843) (Fission yeast) protein is Siroheme biosynthesis protein met8 (met8).